Consider the following 521-residue polypeptide: Bifunctional purine biosynthesis protein PurH (521 aa).

The 145-residue stretch at 1 to 145 (MIKQALISVS…KNHRDVTVVV (145 aa)) folds into the MGS-like domain.

It belongs to the PurH family.

The enzyme catalyses (6R)-10-formyltetrahydrofolate + 5-amino-1-(5-phospho-beta-D-ribosyl)imidazole-4-carboxamide = 5-formamido-1-(5-phospho-D-ribosyl)imidazole-4-carboxamide + (6S)-5,6,7,8-tetrahydrofolate. It catalyses the reaction IMP + H2O = 5-formamido-1-(5-phospho-D-ribosyl)imidazole-4-carboxamide. The protein operates within purine metabolism; IMP biosynthesis via de novo pathway; 5-formamido-1-(5-phospho-D-ribosyl)imidazole-4-carboxamide from 5-amino-1-(5-phospho-D-ribosyl)imidazole-4-carboxamide (10-formyl THF route): step 1/1. It participates in purine metabolism; IMP biosynthesis via de novo pathway; IMP from 5-formamido-1-(5-phospho-D-ribosyl)imidazole-4-carboxamide: step 1/1. The sequence is that of Bifunctional purine biosynthesis protein PurH from Paraburkholderia xenovorans (strain LB400).